Here is a 478-residue protein sequence, read N- to C-terminus: Transcript termination protein A18 (478 aa).

The Helicase ATP-binding domain occupies 98–254; it reads KLSTHRPMYM…NDVVNVLKVS (157 aa). 111-118 contacts ATP; that stretch reads LSCGFGKT. The DESH box motif lies at 204–207; that stretch reads DESH. The region spanning 302–454 is the Helicase C-terminal domain; sequence PRNNLIVDTV…IVSVSTDKLG (153 aa). The interval 456 to 478 is disordered; sequence QQEGKEGTKEEPALTKAFSSQIR. The span at 458 to 468 shows a compositional bias: basic and acidic residues; it reads EGKEGTKEEPA.

Belongs to the helicase family. Poxviruses subfamily. As to quaternary structure, interacts with G2. Might be part of a transcription complex composed at least of G2, A18, and H5.

The protein resides in the virion. Functionally, DNA helicase which seems to act as a postreplicative transcription termination factor. Involved in ATP-dependent release of nascent RNA. Forms a stable complex with single-stranded DNA, and to a lesser extent RNA. This is Transcript termination protein A18 from Oryctolagus cuniculus (Rabbit).